Here is a 236-residue protein sequence, read N- to C-terminus: Ubiquinone biosynthesis O-methyltransferase (236 aa).

Residues Arg-36, Gly-56, Asp-77, and Met-125 each coordinate S-adenosyl-L-methionine.

The protein belongs to the methyltransferase superfamily. UbiG/COQ3 family.

It catalyses the reaction a 3-demethylubiquinol + S-adenosyl-L-methionine = a ubiquinol + S-adenosyl-L-homocysteine + H(+). The catalysed reaction is a 3-(all-trans-polyprenyl)benzene-1,2-diol + S-adenosyl-L-methionine = a 2-methoxy-6-(all-trans-polyprenyl)phenol + S-adenosyl-L-homocysteine + H(+). The protein operates within cofactor biosynthesis; ubiquinone biosynthesis. In terms of biological role, O-methyltransferase that catalyzes the 2 O-methylation steps in the ubiquinone biosynthetic pathway. The chain is Ubiquinone biosynthesis O-methyltransferase from Glaesserella parasuis serovar 5 (strain SH0165) (Haemophilus parasuis).